The sequence spans 254 residues: Arginine transport ATP-binding protein ArgV (254 aa).

The ABC transporter domain maps to 6–250 (IDAQQVCKNY…PKEQRTKDFL (245 aa)). Position 38 to 45 (38 to 45 (GPSGSGKS)) interacts with ATP.

This sequence belongs to the ABC transporter superfamily. The complex is probably composed of two ATP-binding proteins (ArgV), two transmembrane proteins (ArgU) and a solute-binding protein (ArgT).

Its subcellular location is the cell membrane. The enzyme catalyses a polar amino acid(out) + ATP + H2O = a polar amino acid(in) + ADP + phosphate + H(+). It carries out the reaction L-arginine(out) + ATP + H2O = L-arginine(in) + ADP + phosphate + H(+). Its function is as follows. Part of the ABC transporter complex ArgTUV involved in L-arginine import. May also transport L-citrulline. Probably responsible for energy coupling to the transport system. This Corynebacterium glutamicum (strain ATCC 13032 / DSM 20300 / JCM 1318 / BCRC 11384 / CCUG 27702 / LMG 3730 / NBRC 12168 / NCIMB 10025 / NRRL B-2784 / 534) protein is Arginine transport ATP-binding protein ArgV.